Consider the following 575-residue polypeptide: Adenine deaminase (575 aa).

Belongs to the metallo-dependent hydrolases superfamily. Adenine deaminase family. Requires Mn(2+) as cofactor.

It carries out the reaction adenine + H2O + H(+) = hypoxanthine + NH4(+). In Nitratidesulfovibrio vulgaris (strain ATCC 29579 / DSM 644 / CCUG 34227 / NCIMB 8303 / VKM B-1760 / Hildenborough) (Desulfovibrio vulgaris), this protein is Adenine deaminase.